A 200-amino-acid polypeptide reads, in one-letter code: Probable GTP-binding protein EngB (200 aa).

The EngB-type G domain maps to 22–197; sequence DLPEIAFAGR…WQAIQDAVEE (176 aa). Residues 30 to 37, 57 to 61, 78 to 81, 145 to 148, and 176 to 178 contribute to the GTP site; these read GRSNVGKS, GRTQL, DLPG, TKCD, and FSA. Mg(2+) contacts are provided by Ser-37 and Thr-59.

The protein belongs to the TRAFAC class TrmE-Era-EngA-EngB-Septin-like GTPase superfamily. EngB GTPase family. Mg(2+) serves as cofactor.

Functionally, necessary for normal cell division and for the maintenance of normal septation. The polypeptide is Probable GTP-binding protein EngB (Trichlorobacter lovleyi (strain ATCC BAA-1151 / DSM 17278 / SZ) (Geobacter lovleyi)).